Consider the following 239-residue polypeptide: Putative transcriptional regulator of 2-aminoethylphosphonate degradation operons (239 aa).

Residues 8–76 (IPQYLLIKAQ…DRRGWFVTPE (69 aa)) form the HTH gntR-type domain. The H-T-H motif DNA-binding region spans 36–55 (ERELCAIFNTTRITIRESLA).

This is Putative transcriptional regulator of 2-aminoethylphosphonate degradation operons (phnR) from Salmonella paratyphi A (strain ATCC 9150 / SARB42).